A 361-amino-acid chain; its full sequence is MSTTITNSTAERKHSHVDICLNGDVAFSTPTTGFERYRLRHNALPEVSFADITTESRFLGRRIGAPLMISSMTGGYSEAAELNRQLAETAERFQLPLGVGSMRQALEDDAYRDSFSVVRRHAPTIQIFANIGAPEVAKGLSDKDLHIMLEMIRADGLIIHLNAAQELFQPEGGTDFRRVLDNIADIAAKLPVPVIAKEVGCGISGAVARKLLEAGVQVIDVAGAGGISWQKVEEARYTRRFGSDTRFSQEGIEELLNWGIPTAACVVEVDALRPRTAGGRPFSIIASGGIHSGLDIAKSIALGADLAASAGALLRALHHGTLEATITAWLQDLRASMFLTGSANVAELQNNRPIGDTAKQP.

12–13 (RK) is a substrate binding site. FMN-binding positions include Ser70, 71-73 (SMT), Ser101, and Asn130. 101 to 103 (SMR) is a substrate binding site. Residue Gln165 coordinates substrate. Residue Glu166 participates in Mg(2+) binding. FMN is bound by residues Lys197 and 310–311 (AG).

The protein belongs to the IPP isomerase type 2 family. Homooctamer. Dimer of tetramers. FMN serves as cofactor. Requires NADPH as cofactor. The cofactor is Mg(2+).

The protein localises to the cytoplasm. The catalysed reaction is isopentenyl diphosphate = dimethylallyl diphosphate. Involved in the biosynthesis of isoprenoids. Catalyzes the 1,3-allylic rearrangement of the homoallylic substrate isopentenyl (IPP) to its allylic isomer, dimethylallyl diphosphate (DMAPP). This Chlorobium luteolum (strain DSM 273 / BCRC 81028 / 2530) (Pelodictyon luteolum) protein is Isopentenyl-diphosphate delta-isomerase.